A 325-amino-acid chain; its full sequence is Golgi to ER traffic protein 4 homolog B (325 aa).

Disordered stretches follow at residues 1–22 and 306–325; these read MAAA…GGVQ and SGED…IELD. Over residues 307–317 the composition is skewed to acidic residues; sequence GEDDDVEDGQE.

It belongs to the GET4 family. Component of the bag6/bat3 complex.

The protein resides in the cytoplasm. Its subcellular location is the cytosol. Functionally, as part of a cytosolic protein quality control complex, the bag6/bat3 complex, maintains misfolded and hydrophobic patches-containing proteins in a soluble state and participates in their proper delivery to the endoplasmic reticulum or alternatively can promote their sorting to the proteasome where they undergo degradation. The bag6/bat3 complex is involved in the post-translational delivery of tail-anchored/type II transmembrane proteins to the endoplasmic reticulum membrane. Similarly, the bag6/bat3 complex also functions as a sorting platform for proteins of the secretory pathway that are mislocalized to the cytosol either delivering them to the proteasome for degradation or to the endoplasmic reticulum. The bag6/bat3 complex also plays a role in the endoplasmic reticulum-associated degradation (ERAD), a quality control mechanism that eliminates unwanted proteins of the endoplasmic reticulum through their retrotranslocation to the cytosol and their targeting to the proteasome. It maintains these retrotranslocated proteins in an unfolded yet soluble state condition in the cytosol to ensure their proper delivery to the proteasome. The sequence is that of Golgi to ER traffic protein 4 homolog B (get4-b) from Xenopus laevis (African clawed frog).